The sequence spans 192 residues: MFAVENGLQGDPRLKAISDAIRVIPHFPKTGIMFQDITTLLLDPVAFKHVVDIFVDRYKHMNISLVAGVEARGFIFGPPIALAIGAKFVPLRKPGKLPGRVISEEYELEYGRDCLEMSVEAVKSEERALIIDDLVATGGTLSASINLLERAGAEVVECACVVGLPKFKGQCKLKGKPLYVLVEPNQFDELTL.

It belongs to the purine/pyrimidine phosphoribosyltransferase family. Homodimer.

Its subcellular location is the cytoplasm. The catalysed reaction is AMP + diphosphate = 5-phospho-alpha-D-ribose 1-diphosphate + adenine. It participates in purine metabolism; AMP biosynthesis via salvage pathway; AMP from adenine: step 1/1. Catalyzes a salvage reaction resulting in the formation of AMP, that is energically less costly than de novo synthesis. May contribute to the recycling of adenine into adenylate nucleotides and the inactivation of cytokinins by phosphoribosylation. Possesses low activity toward adenine and cytokinins. The polypeptide is Adenine phosphoribosyltransferase 2 (APT2) (Arabidopsis thaliana (Mouse-ear cress)).